A 195-amino-acid polypeptide reads, in one-letter code: Imidazoleglycerol-phosphate dehydratase (195 aa).

The protein belongs to the imidazoleglycerol-phosphate dehydratase family.

Its subcellular location is the cytoplasm. The catalysed reaction is D-erythro-1-(imidazol-4-yl)glycerol 3-phosphate = 3-(imidazol-4-yl)-2-oxopropyl phosphate + H2O. The protein operates within amino-acid biosynthesis; L-histidine biosynthesis; L-histidine from 5-phospho-alpha-D-ribose 1-diphosphate: step 6/9. The protein is Imidazoleglycerol-phosphate dehydratase of Cereibacter sphaeroides (strain ATCC 17025 / ATH 2.4.3) (Rhodobacter sphaeroides).